The primary structure comprises 119 residues: Large ribosomal subunit protein bL20 (119 aa).

Belongs to the bacterial ribosomal protein bL20 family.

Functionally, binds directly to 23S ribosomal RNA and is necessary for the in vitro assembly process of the 50S ribosomal subunit. It is not involved in the protein synthesizing functions of that subunit. The protein is Large ribosomal subunit protein bL20 of Thermoanaerobacter pseudethanolicus (strain ATCC 33223 / 39E) (Clostridium thermohydrosulfuricum).